The primary structure comprises 233 residues: Biosynthetic peptidoglycan transglycosylase (233 aa).

The helical transmembrane segment at 8 to 28 threads the bilayer; the sequence is LIALPVGIFIFFNAYVYGNII.

This sequence belongs to the glycosyltransferase 51 family.

The protein resides in the cell inner membrane. It catalyses the reaction [GlcNAc-(1-&gt;4)-Mur2Ac(oyl-L-Ala-gamma-D-Glu-L-Lys-D-Ala-D-Ala)](n)-di-trans,octa-cis-undecaprenyl diphosphate + beta-D-GlcNAc-(1-&gt;4)-Mur2Ac(oyl-L-Ala-gamma-D-Glu-L-Lys-D-Ala-D-Ala)-di-trans,octa-cis-undecaprenyl diphosphate = [GlcNAc-(1-&gt;4)-Mur2Ac(oyl-L-Ala-gamma-D-Glu-L-Lys-D-Ala-D-Ala)](n+1)-di-trans,octa-cis-undecaprenyl diphosphate + di-trans,octa-cis-undecaprenyl diphosphate + H(+). It functions in the pathway cell wall biogenesis; peptidoglycan biosynthesis. In terms of biological role, peptidoglycan polymerase that catalyzes glycan chain elongation from lipid-linked precursors. The polypeptide is Biosynthetic peptidoglycan transglycosylase (Neisseria meningitidis serogroup C (strain 053442)).